A 436-amino-acid chain; its full sequence is Phaseolin, alpha-type (436 aa).

A signal peptide spans Met-1 to Ala-24. The segment at Leu-233–Gly-257 is disordered. The segment covering His-236 to His-245 has biased composition (basic residues). Positions His-245–Met-396 constitute a Cupin type-1 domain. A glycan (N-linked (GlcNAc...) (complex) asparagine; alternate) is linked at Asn-258. Residue Asn-258 is glycosylated (N-linked (GlcNAc...) (high mannose) asparagine; alternate). N-linked (GlcNAc...) (high mannose) asparagine glycosylation is present at Asn-347. A disordered region spans residues His-411–Tyr-436. Residues Gln-417–Gln-426 are compositionally biased toward low complexity.

The protein belongs to the 7S seed storage protein family. In terms of assembly, homotrimer. N-glycosylated; glycans consist in Man9(GlcNAc)2 and Man7(GlcNAc)2 when dually glycosylated at Asn-258 and Asn-347, whereas it consists in Xyl-Man3(GlcNAc)2 when solely glycosylated at Asn-258.

Its subcellular location is the vacuole. The protein resides in the aleurone grain. Major seed storage protein. The polypeptide is Phaseolin, alpha-type (Phaseolus vulgaris (Kidney bean)).